The chain runs to 368 residues: Endophilin-A2 (368 aa).

Positions 1 to 21 (MSVAGLKKQFYKASQLVSEKV) are membrane-binding amphipathic helix. The 232-residue stretch at 18-249 (SEKVGGAEGT…LKRRMREASS (232 aa)) folds into the BAR domain. The required for dimerization upon membrane association stretch occupies residues 60–87 (PNPASRAKLTMLNTVSKIRGQVKNPGYP). Residues 145-250 (NLCEKDLKEI…KRRMREASSR (106 aa)) adopt a coiled-coil conformation. The interval 218–254 (LVDAQLDYHRQAVQILDELAEKLKRRMREASSRPKRE) is interaction with ARC. The segment at 244-308 (MREASSRPKR…PSRSMPPLDQ (65 aa)) is disordered. Basic and acidic residues predominate over residues 245-263 (REASSRPKREYKPKPREPF). Ser-288 and Ser-292 each carry phosphoserine. A Phosphothreonine modification is found at Thr-298. An SH3 domain is found at 306-365 (LDQPSCKALYDFEPENDGELGFHEGDVITLTNQIDENWYEGMLDGQSGFFPLSYVEVLVP). Position 315 is a phosphotyrosine (Tyr-315).

This sequence belongs to the endophilin family. In terms of assembly, interacts with ARC. Interacts with SYNJ1 and DNM1. Interacts with PDCD6IP. Interacts with BIN2. In terms of tissue distribution, ubiquitous. Higher expression in pancreas, placenta, prostate, testis and uterus.

The protein resides in the cytoplasm. Its subcellular location is the early endosome membrane. It is found in the cell projection. It localises to the podosome. In terms of biological role, implicated in endocytosis. May recruit other proteins to membranes with high curvature. In Homo sapiens (Human), this protein is Endophilin-A2 (SH3GL1).